Reading from the N-terminus, the 710-residue chain is Mitochondrial intermediate peptidase (710 aa).

The N-terminal 33 residues, 1 to 33 (MLLAAGTRYAYRLCGRRAAAALQGRAGRSCARS), are a transit peptide targeting the mitochondrion. Residue lysine 124 is modified to N6-acetyllysine. Histidine 492 is a binding site for Zn(2+). Residue glutamate 493 is part of the active site. Zn(2+)-binding residues include histidine 496 and histidine 499.

This sequence belongs to the peptidase M3 family. As to quaternary structure, monomer. Zn(2+) serves as cofactor.

It is found in the mitochondrion matrix. The catalysed reaction is Release of an N-terminal octapeptide as second stage of processing of some proteins imported into the mitochondrion.. Its activity is regulated as follows. Activity is divalent cation-dependent. It is stimulated by manganese, magnesium or calcium ions and reversibly inhibited by zinc, cobalt and iron. Cleaves proteins, imported into the mitochondrion, to their mature size. In Rattus norvegicus (Rat), this protein is Mitochondrial intermediate peptidase (Mipep).